The primary structure comprises 964 residues: Iron-responsive element-binding protein 2 (964 aa).

[4Fe-4S] cluster contacts are provided by Cys513, Cys579, and Cys582.

This sequence belongs to the aconitase/IPM isomerase family. In terms of assembly, interacts with RBCK1 only in iron-rich conditions. Interacts (when associated with the 4Fe-4S) with FBXL5. Interacts with CIAO1 and CIAO2A. The cofactor is [4Fe-4S] cluster. Post-translationally, ubiquitinated and degraded by the proteasome in presence of high level of iron and oxygen. Ubiquitinated by a SCF complex containing FBXL5. Upon iron and oxygen depletion FBXL5 is degraded, preventing ubiquitination and allowing its RNA-binding activity.

The protein localises to the cytoplasm. Its function is as follows. RNA-binding protein that binds to iron-responsive elements (IRES), which are stem-loop structures found in the 5'-UTR of ferritin, and delta aminolevulinic acid synthase mRNAs, and in the 3'-UTR of transferrin receptor mRNA. Binding to the IRE element in ferritin results in the repression of its mRNA translation. Binding of the protein to the transferrin receptor mRNA inhibits the degradation of this otherwise rapidly degraded mRNA. This is Iron-responsive element-binding protein 2 (IREB2) from Sus scrofa (Pig).